Here is a 688-residue protein sequence, read N- to C-terminus: Potassium-transporting ATPase ATP-binding subunit (688 aa).

A run of 4 helical transmembrane segments spans residues 37–57 (FLVY…LVGI), 65–85 (ILGI…AEAI), 219–239 (IALQ…TVSL), and 262–282 (VALL…SIGI). Catalysis depends on Asp313, which acts as the 4-aspartylphosphate intermediate. Residues Asp350, Glu354, 383–390 (FTAKTRMS), and Lys401 each bind ATP. 2 residues coordinate Mg(2+): Asp524 and Asp528. The next 3 membrane-spanning stretches (helical) occupy residues 594–614 (FAII…LNIM), 622–642 (AIFS…PLAL), and 668–688 (IIVP…IGIV).

It belongs to the cation transport ATPase (P-type) (TC 3.A.3) family. Type IA subfamily. The system is composed of three essential subunits: KdpA, KdpB and KdpC.

The protein resides in the cell membrane. It carries out the reaction K(+)(out) + ATP + H2O = K(+)(in) + ADP + phosphate + H(+). Its function is as follows. Part of the high-affinity ATP-driven potassium transport (or Kdp) system, which catalyzes the hydrolysis of ATP coupled with the electrogenic transport of potassium into the cytoplasm. This subunit is responsible for energy coupling to the transport system and for the release of the potassium ions to the cytoplasm. The chain is Potassium-transporting ATPase ATP-binding subunit from Clostridium botulinum (strain Alaska E43 / Type E3).